A 96-amino-acid polypeptide reads, in one-letter code: MSAMQVDVVYALPERQYLRTVKLEEGSTVEQAIVASGLLELRHDIDLQVNKVGIYSRAAKLADVVQDGDRVEIYRPLIADPKELRRQRAERSKSKP.

Belongs to the UPF0125 (RnfH) family.

This is Protein RnfH from Pectobacterium carotovorum subsp. carotovorum (strain PC1).